Here is a 356-residue protein sequence, read N- to C-terminus: Cell division control protein 10 (356 aa).

A Septin-type G domain is found at lysine 36 to isoleucine 286. Residues glycine 46–serine 53 are G1 motif. GTP is bound by residues glycine 46–serine 53 and threonine 70. Residues threonine 93–glutamate 96 form a G3 motif region. The segment at proline 163–aspartate 166 is G4 motif. Residues lysine 164 to glutamate 172 and arginine 235 each bind GTP.

Belongs to the TRAFAC class TrmE-Era-EngA-EngB-Septin-like GTPase superfamily. Septin GTPase family. In terms of assembly, component of the septin complex.

Its function is as follows. Septins are GTPases involved in cytokinesis. The septins localize to the site of cleavage and act as a structural scaffold that recruits different components involved in diverse processes at specific stages during the cell cycle. Septins are also involved in cell morphogenesis, chitin deposition, cell cycle regulation, cell compartmentalization and spore wall formation. This is Cell division control protein 10 (CDC10) from Encephalitozoon cuniculi (strain GB-M1) (Microsporidian parasite).